Reading from the N-terminus, the 220-residue chain is Tumor protein D54 (220 aa).

Met1 bears the N-acetylmethionine mark. Phosphoserine occurs at positions 3, 12, and 19. A coiled-coil region spans residues 40–82; that stretch reads GLTEGEEEELRAELAKVEEEIVTLRQVLAAKERHCGELKRRLG. Residues Ser96, Ser149, Ser168, and Ser175 each carry the phosphoserine modification. Residue Thr177 is modified to Phosphothreonine. Phosphoserine is present on Ser180. At Thr187 the chain carries Phosphothreonine. The disordered stretch occupies residues 189–220; that stretch reads KSKVVGGRENGSDNLPPSPGSGDQTLPDHAPF. Phosphoserine occurs at positions 206 and 209.

The protein belongs to the TPD52 family. Forms a homodimer or heterodimer with other members of the family. Interacts with MAL2.

The chain is Tumor protein D54 (Tpd52l2) from Mus musculus (Mouse).